The sequence spans 1000 residues: Isoleucine--tRNA ligase, mitochondrial (1000 aa).

The transit peptide at 1–27 directs the protein to the mitochondrion; it reads MLGAWRAAPRLRLRARFGVASVWARSA. The 'HIGH' region motif lies at 102–112; it reads PYANGDPHVGH. ATP is bound by residues Lys-649 and Lys-652. The 'KMSKS' region signature appears at 649–653; sequence KMSKS.

It belongs to the class-I aminoacyl-tRNA synthetase family.

Its subcellular location is the mitochondrion matrix. The enzyme catalyses tRNA(Ile) + L-isoleucine + ATP = L-isoleucyl-tRNA(Ile) + AMP + diphosphate. In terms of biological role, aminoacyl-tRNA synthetase that catalyzes the specific attachment of isoleucine to its cognate tRNA (tRNA(Ile)). This Gallus gallus (Chicken) protein is Isoleucine--tRNA ligase, mitochondrial (IARS2).